The following is a 604-amino-acid chain: NADP-dependent malic enzyme, mitochondrial (604 aa).

Residues 29–50 (APAQGCHSKPGPARPVPLKKRG) are disordered. The active-site Proton donor is Tyr137. An NAD(+)-binding site is contributed by Arg190. The Proton acceptor role is filled by Lys208. The a divalent metal cation site is built by Glu280, Asp281, and Asp304. Asp304 serves as a coordination point for NAD(+). Ser371 bears the Phosphoserine mark. NAD(+) is bound at residue Asn443.

The protein belongs to the malic enzymes family. Requires Mg(2+) as cofactor. It depends on Mn(2+) as a cofactor. As to expression, expressed predominantly in organs with a low-division rate.

The protein localises to the mitochondrion matrix. It catalyses the reaction (S)-malate + NADP(+) = pyruvate + CO2 + NADPH. The catalysed reaction is oxaloacetate + H(+) = pyruvate + CO2. Its function is as follows. Catalyzes the oxidative decarboxylation of (S)-malate to pyruvate using NADP(+) as a cofactor. Can also reverse the decarboxylation reaction, but only with significantly lower efficiency. The sequence is that of NADP-dependent malic enzyme, mitochondrial from Homo sapiens (Human).